Here is a 615-residue protein sequence, read N- to C-terminus: Zinc finger protein 653 (615 aa).

3 disordered regions span residues Met-1 to Arg-46, Arg-93 to Arg-115, and Pro-174 to Ile-235. Positions Glu-7–Gly-25 are enriched in low complexity. Residues Lys-106–Arg-115 show a composition bias toward basic residues. Composition is skewed to low complexity over residues Gly-192–Ser-203 and Gln-212–Ser-232. 5 C2H2-type zinc fingers span residues Phe-467–His-492, Lys-498–His-522, Phe-528–His-550, Leu-556–His-578, and Phe-586–His-609.

Belongs to the krueppel C2H2-type zinc-finger protein family. In terms of assembly, interacts with NR5A1. Highly expressed in testis and spleen. Moderately expressed in lung, adrenal gland, uterus, and ovary. Very low expression in pancreas, heart, skeletal muscle, adipose tissue, kidney, and liver.

Its subcellular location is the nucleus. Functionally, transcriptional repressor. May repress NR5A1, PPARG, NR1H3, NR4A2, ESR1 and NR3C1 transcriptional activity. This chain is Zinc finger protein 653 (Znf653), found in Mus musculus (Mouse).